The primary structure comprises 130 residues: Protein ApaG (130 aa).

The ApaG domain occupies 3 to 127; sequence RALTKDIEVV…FSLDSPGLLR (125 aa).

This Rhizobium leguminosarum bv. trifolii (strain WSM2304) protein is Protein ApaG.